The chain runs to 642 residues: Serotransferrin (642 aa).

Transferrin-like domains are found at residues 1-280 and 290-621; these read GIKE…SLKK and IKWC…SLRQ. 2 residues coordinate Fe(3+): D25 and Y54. 3 cysteine pairs are disulfide-bonded: C77-C158, C121-C137, and C186-C200. Positions 79, 83, 85, and 86 each coordinate hydrogencarbonate. Y152 lines the Fe(3+) pocket. Position 208 (H208) interacts with Fe(3+). 2 disulfides stabilise this stretch: C293/C329 and C303/C320. D344 provides a ligand contact to Fe(3+). 7 disulfide bridges follow: C354–C633, C369–C594, C402–C480, C426–C622, C436–C450, C447–C463, and C520–C535. A glycan (N-linked (GlcNAc...) asparagine) is linked at N365. Y379 is a binding site for Fe(3+). Hydrogencarbonate contacts are provided by T404, R408, A410, and G411. Position 474 (Y474) interacts with Fe(3+). Position 543 (H543) interacts with Fe(3+).

It belongs to the transferrin family. Monomer. In terms of tissue distribution, brain and liver; to a lesser extent in kidney and heart.

The protein localises to the secreted. Its function is as follows. Transferrins are iron binding transport proteins which can bind two Fe(3+) ions in association with the binding of an anion, usually bicarbonate. The sequence is that of Serotransferrin (tf) from Gadus morhua (Atlantic cod).